The following is a 375-amino-acid chain: Glutamate 5-kinase (375 aa).

Lys17 serves as a coordination point for ATP. Residues Ser57, Asp144, and Asn156 each contribute to the substrate site. ATP is bound at residue 176–177 (TD). Residues 283-361 (KGELILDTGA…DEIEGILGYV (79 aa)) enclose the PUA domain.

The protein belongs to the glutamate 5-kinase family.

It is found in the cytoplasm. It carries out the reaction L-glutamate + ATP = L-glutamyl 5-phosphate + ADP. It participates in amino-acid biosynthesis; L-proline biosynthesis; L-glutamate 5-semialdehyde from L-glutamate: step 1/2. Its function is as follows. Catalyzes the transfer of a phosphate group to glutamate to form L-glutamate 5-phosphate. This is Glutamate 5-kinase from Thioalkalivibrio sulfidiphilus (strain HL-EbGR7).